Reading from the N-terminus, the 118-residue chain is Large ribosomal subunit protein uL18 (118 aa).

This sequence belongs to the universal ribosomal protein uL18 family. In terms of assembly, part of the 50S ribosomal subunit; part of the 5S rRNA/L5/L18/L25 subcomplex. Contacts the 5S and 23S rRNAs.

Its function is as follows. This is one of the proteins that bind and probably mediate the attachment of the 5S RNA into the large ribosomal subunit, where it forms part of the central protuberance. This is Large ribosomal subunit protein uL18 from Dichelobacter nodosus (strain VCS1703A).